Here is a 133-residue protein sequence, read N- to C-terminus: Large ribosomal subunit protein bL17 (133 aa).

Belongs to the bacterial ribosomal protein bL17 family. As to quaternary structure, part of the 50S ribosomal subunit. Contacts protein L32.

The sequence is that of Large ribosomal subunit protein bL17 from Pseudoalteromonas translucida (strain TAC 125).